Here is a 28-residue protein sequence, read N- to C-terminus: Cytochrome c oxidase subunit 5B, mitochondrial (28 aa).

Belongs to the cytochrome c oxidase subunit 5B family. As to quaternary structure, component of the cytochrome c oxidase (complex IV, CIV), a multisubunit enzyme composed of a catalytic core of 3 subunits and several supernumerary subunits. The complex exists as a monomer or a dimer and forms supercomplexes (SCs) in the inner mitochondrial membrane with ubiquinol-cytochrome c oxidoreductase (cytochrome b-c1 complex, complex III, CIII).

It localises to the mitochondrion inner membrane. It functions in the pathway energy metabolism; oxidative phosphorylation. Its function is as follows. Component of the cytochrome c oxidase, the last enzyme in the mitochondrial electron transport chain which drives oxidative phosphorylation. The respiratory chain contains 3 multisubunit complexes succinate dehydrogenase (complex II, CII), ubiquinol-cytochrome c oxidoreductase (cytochrome b-c1 complex, complex III, CIII) and cytochrome c oxidase (complex IV, CIV), that cooperate to transfer electrons derived from NADH and succinate to molecular oxygen, creating an electrochemical gradient over the inner membrane that drives transmembrane transport and the ATP synthase. Cytochrome c oxidase is the component of the respiratory chain that catalyzes the reduction of oxygen to water. Electrons originating from reduced cytochrome c in the intermembrane space (IMS) are transferred via the dinuclear copper A center (CU(A)) of subunit 2 and heme A of subunit 1 to the active site in subunit 1, a binuclear center (BNC) formed by heme A3 and copper B (CU(B)). The BNC reduces molecular oxygen to 2 water molecules using 4 electrons from cytochrome c in the IMS and 4 protons from the mitochondrial matrix. In Solanum tuberosum (Potato), this protein is Cytochrome c oxidase subunit 5B, mitochondrial.